Reading from the N-terminus, the 339-residue chain is Fructose-1,6-bisphosphatase class 1 (339 aa).

Positions 91, 113, 115, and 116 each coordinate Mg(2+). Residues 116–119 (DGSS), Asn-208, and Lys-274 contribute to the substrate site. Glu-280 is a Mg(2+) binding site.

Belongs to the FBPase class 1 family. As to quaternary structure, homotetramer. The cofactor is Mg(2+).

It is found in the cytoplasm. It carries out the reaction beta-D-fructose 1,6-bisphosphate + H2O = beta-D-fructose 6-phosphate + phosphate. It participates in carbohydrate biosynthesis; gluconeogenesis. In Cupriavidus pinatubonensis (strain JMP 134 / LMG 1197) (Cupriavidus necator (strain JMP 134)), this protein is Fructose-1,6-bisphosphatase class 1.